We begin with the raw amino-acid sequence, 215 residues long: Eukaryotic translation initiation factor 4E-1 (215 aa).

The tract at residues 1 to 32 (MAEDTETRPASAGAEEREEGEIADDGDGSSAA) is disordered. A compositionally biased stretch (acidic residues) spans 16–27 (EREEGEIADDGD). EIF4G-binding stretches follow at residues 40 to 43 (HPLE) and 50 to 86 (FDNPQGKSRQVAWGSTIHPIHTFSTVEDFWGLYNNIH). MRNA is bound by residues 58–63 (RQVAWG), K90, and 108–109 (WE). The cysteines at positions 113 and 151 are disulfide-linked. Residues 134–143 (HTLLAMIGEQ) form an EIF4G-binding region. MRNA is bound by residues 158–163 (RQKQER) and 203–207 (KRSDK).

This sequence belongs to the eukaryotic initiation factor 4E family. In terms of assembly, EIF4F is a multi-subunit complex, the composition of which varies with external and internal environmental conditions. It is composed of at least EIF4A, EIF4E and EIF4G. EIF4E is also known to interact with other partners. In higher plants two isoforms of EIF4F have been identified, named isoform EIF4F and isoform EIF(iso)4F. Isoform EIF4F has subunits p220 and p26, whereas isoform EIF(iso)4F has subunits p82 and p28. In terms of processing, according to the redox status, the Cys-113-Cys-151 disulfide bridge may have a role in regulating protein function by affecting its ability to bind capped mRNA.

The protein resides in the nucleus. Its subcellular location is the cytoplasm. Component of the protein complex eIF4F, which is involved in the recognition of the mRNA cap, ATP-dependent unwinding of 5'-terminal secondary structure and recruitment of mRNA to the ribosome. Recognizes and binds the 7-methylguanosine-containing mRNA cap during an early step in the initiation of protein synthesis and facilitates ribosome binding by inducing the unwinding of the mRNAs secondary structures. This chain is Eukaryotic translation initiation factor 4E-1, found in Triticum aestivum (Wheat).